The following is a 796-amino-acid chain: Fibroblast growth factor receptor 3 (796 aa).

An N-terminal signal peptide occupies residues 1–19 (MLVWLCGLCLVTLAGGRSA). The Extracellular segment spans residues 20-358 (ARLPLTEGRP…AEPVPDVDTS (339 aa)). The Ig-like C2-type 1 domain maps to 21–119 (RLPLTEGRPT…VLRNVTVRVT (99 aa)). Residues cysteine 56 and cysteine 102 are joined by a disulfide bond. 2 N-linked (GlcNAc...) asparagine glycosylation sites follow: asparagine 91 and asparagine 113. The segment at 117-142 (RVTDSPSSGDDEDDDEESESANAPKF) is disordered. The segment covering 125-135 (GDDEDDDEESE) has biased composition (acidic residues). 2 Ig-like C2-type domains span residues 140-233 (PKFT…YTLD) and 239-344 (PHRP…AWLT). An intrachain disulfide couples cysteine 165 to cysteine 217. Residues asparagine 214, asparagine 251, asparagine 283, asparagine 304, and asparagine 317 are each glycosylated (N-linked (GlcNAc...) asparagine). The cysteines at positions 264 and 328 are disulfide-linked. The helical transmembrane segment at 359–379 (VSILAAAGCVAVVILVVIIIF) threads the bilayer. At 380–796 (TYKMKMPSKK…HQQYNGVIRT (417 aa)) the chain is on the cytoplasmic side. The Protein kinase domain occupies 457–746 (LTLGKPLGEG…LTVTSTDEYL (290 aa)). ATP contacts are provided by residues 463–471 (LGEGCFGQV) and lysine 493. The active-site Proton acceptor is the aspartate 602. Residues tyrosine 632, tyrosine 633, tyrosine 709, and tyrosine 745 each carry the phosphotyrosine; by autocatalysis modification.

The protein belongs to the protein kinase superfamily. Tyr protein kinase family. Fibroblast growth factor receptor subfamily. Monomer. Homodimer after ligand binding. Autophosphorylated. Binding of FGF family members together with heparan sulfate proteoglycan or heparin promotes receptor dimerization and autophosphorylation on tyrosine residues. Autophosphorylation occurs in trans between the two FGFR molecules present in the dimer. As to expression, undetectable in the adult skeletal muscle. Low levels of expression were detected in the liver, lung and kidney. Medium levels of expression were detected in the heart, spleen, intestine and eye. Highest expression is observed in the testis.

It is found in the cell membrane. It carries out the reaction L-tyrosyl-[protein] + ATP = O-phospho-L-tyrosyl-[protein] + ADP + H(+). Its activity is regulated as follows. Present in an inactive conformation in the absence of bound ligand. Ligand binding leads to dimerization and activation by autophosphorylation on tyrosine residues. Tyrosine-protein kinase that acts as a cell-surface receptor for fibroblast growth factors and plays an essential role in the regulation of cell proliferation, differentiation and apoptosis. Plays an essential role in the regulation of chondrocyte differentiation, proliferation and apoptosis, and is required for normal skeleton development. Regulates both osteogenesis and postnatal bone mineralization by osteoblasts. Promotes apoptosis in chondrocytes, but can also promote cancer cell proliferation. Phosphorylates PLCG1, CBL and FRS2. Ligand binding leads to the activation of several signaling cascades. Activation of PLCG1 leads to the production of the cellular signaling molecules diacylglycerol and inositol 1,4,5-trisphosphate. Phosphorylation of FRS2 triggers recruitment of GRB2, GAB1, PIK3R1 and SOS1, and mediates activation of RAS, MAPK1/ERK2, MAPK3/ERK1 and the MAP kinase signaling pathway, as well as of the AKT1 signaling pathway. The sequence is that of Fibroblast growth factor receptor 3 (FGFR3) from Pleurodeles waltl (Iberian ribbed newt).